The chain runs to 358 residues: Phospho-N-acetylmuramoyl-pentapeptide-transferase (358 aa).

The next 10 membrane-spanning stretches (helical) occupy residues 27 to 47 (IYAM…VIRV), 73 to 93 (TMGG…WADL), 97 to 117 (YIWT…VDDY), 134 to 154 (MFWQ…KPGF), 170 to 190 (LWFW…NAVN), 197 to 217 (GLAI…SYVA), 233 to 253 (GAGE…GFLW), 261 to 281 (VFMG…IAVI), 286 to 306 (ILLV…IFQV), and 335 to 355 (KIIV…ISTL).

This sequence belongs to the glycosyltransferase 4 family. MraY subfamily. Requires Mg(2+) as cofactor.

It localises to the cell inner membrane. The catalysed reaction is UDP-N-acetyl-alpha-D-muramoyl-L-alanyl-gamma-D-glutamyl-meso-2,6-diaminopimeloyl-D-alanyl-D-alanine + di-trans,octa-cis-undecaprenyl phosphate = di-trans,octa-cis-undecaprenyl diphospho-N-acetyl-alpha-D-muramoyl-L-alanyl-D-glutamyl-meso-2,6-diaminopimeloyl-D-alanyl-D-alanine + UMP. It participates in cell wall biogenesis; peptidoglycan biosynthesis. Catalyzes the initial step of the lipid cycle reactions in the biosynthesis of the cell wall peptidoglycan: transfers peptidoglycan precursor phospho-MurNAc-pentapeptide from UDP-MurNAc-pentapeptide onto the lipid carrier undecaprenyl phosphate, yielding undecaprenyl-pyrophosphoryl-MurNAc-pentapeptide, known as lipid I. The sequence is that of Phospho-N-acetylmuramoyl-pentapeptide-transferase from Pelobacter propionicus (strain DSM 2379 / NBRC 103807 / OttBd1).